Consider the following 394-residue polypeptide: [Pyruvate dehydrogenase (acetyl-transferring)] kinase 1, mitochondrial (394 aa).

The transit peptide at 1–20 directs the protein to the mitochondrion; sequence MWKIMRSWKCGGMRWAHRQR. The 261-residue stretch at 126-386 folds into the Histidine kinase domain; the sequence is AYPYELHNPP…DVYIKLKGPS (261 aa). Phosphohistidine; by autocatalysis is present on histidine 148. ATP is bound by residues 267-274, aspartate 304, 323-324, and 347-352; these read EVFKNAFE, ST, and GMGFGL.

Belongs to the PDK/BCKDK protein kinase family. Interacts with PKP2.

It is found in the mitochondrion matrix. It carries out the reaction L-seryl-[pyruvate dehydrogenase E1 alpha subunit] + ATP = O-phospho-L-seryl-[pyruvate dehydrogenase E1 alpha subunit] + ADP + H(+). Inhibits the mitochondrial pyruvate dehydrogenase complex by phosphorylation of the E1 alpha subunit (PDA1), thus contributing to the regulation of glucose metabolism. Also involved in telomere maintenance. The protein is [Pyruvate dehydrogenase (acetyl-transferring)] kinase 1, mitochondrial of Saccharomyces cerevisiae (strain ATCC 204508 / S288c) (Baker's yeast).